The chain runs to 80 residues: Cortexin-3 (80 aa).

Residues 28 to 48 (TTFVFVILLFIFLGILIVRCF) form a helical membrane-spanning segment.

Belongs to the cortexin family.

The protein localises to the membrane. The sequence is that of Cortexin-3 (Ctxn3) from Mus musculus (Mouse).